The sequence spans 674 residues: MFIMSSISHAQLGWNDAGTPVSDQFDDVYFSNVNGLAETRYVFLEQNHLPQRWHNDDQRRFVIAETGFGTGLNFLAVWQAFVAFREANPDAKLKELHFISFEKYPLSKSDLIQAHQAWPELAQFAQKLHKHYPLAIPECQRIVLNDGLVTLDLWFGDIKDCLPKVATQEQGLVDAWFLDGFAPSKNPEMWNQNLFAGMAKLAKHGCTCATFTSAGFVRRGLIDAGFAMKKVKGFGTKREMIAGSLSEKVPYTNIAPEFRFEATHGLQEVAIIGGGIASATLATTLARRGVAVTLYCADEKPAQGASGNRQGAVYPLLSGDHNAVSRVFAPAFLFARQWIEQAAEQINFDHDWCGVTQLMWDEKATDKLKSMLEGNFPTQLVHGLSAEQTNQQVGVPVDKASVHYPLGGWLSPAELTQGLIHLLEQQGKLTAHYQTPIDALTWQPETQLWQLRSGDTLMSHQCVVIASGHQFDSLSQTAELPLGKVKGQVSHIPTTETLSKINSVLCYDGYMTPVSQQNGYHCIGASYDRQHLDATFDPQAQHENAQKLIHCLPEQTWPLEVDVSGNQSRQGVRCVSRDHLPFVGNVGEFSKITEQYRDLAQQHQAEPIALYPQLYALVGLGSRGLSSAPLMAELLASQMCGDPMPLGVDLLEQLHPSRMWVRKLRKGKALTQKV.

Residues 1–246 (MFIMSSISHA…KREMIAGSLS (246 aa)) are tRNA (mnm(5)s(2)U34)-methyltransferase. Residues 272 to 674 (IGGGIASATL…RKGKALTQKV (403 aa)) are FAD-dependent cmnm(5)s(2)U34 oxidoreductase.

It in the N-terminal section; belongs to the methyltransferase superfamily. tRNA (mnm(5)s(2)U34)-methyltransferase family. The protein in the C-terminal section; belongs to the DAO family. It depends on FAD as a cofactor.

It is found in the cytoplasm. It carries out the reaction 5-aminomethyl-2-thiouridine(34) in tRNA + S-adenosyl-L-methionine = 5-methylaminomethyl-2-thiouridine(34) in tRNA + S-adenosyl-L-homocysteine + H(+). Its function is as follows. Catalyzes the last two steps in the biosynthesis of 5-methylaminomethyl-2-thiouridine (mnm(5)s(2)U) at the wobble position (U34) in tRNA. Catalyzes the FAD-dependent demodification of cmnm(5)s(2)U34 to nm(5)s(2)U34, followed by the transfer of a methyl group from S-adenosyl-L-methionine to nm(5)s(2)U34, to form mnm(5)s(2)U34. The polypeptide is tRNA 5-methylaminomethyl-2-thiouridine biosynthesis bifunctional protein MnmC (Vibrio cholerae serotype O1 (strain ATCC 39315 / El Tor Inaba N16961)).